We begin with the raw amino-acid sequence, 590 residues long: Melanophilin (590 aa).

The region spanning 4-124 (RLDLSTLTDE…IGSLEWYYQH (121 aa)) is the RabBD domain. The FYVE-type zinc-finger motif lies at 64–107 (CARCLQPYRLLLNSRRQCLECSLFVCKSCSHAHPEEQGWLCDPC). Disordered stretches follow at residues 147–182 (GGGG…PLNS), 215–276 (SVPE…AELD), 311–335 (DTSD…ARTV), 361–472 (VLPP…SEIS), and 485–590 (GLTV…AQQP). Over residues 154 to 172 (SLEEGNGDSEQTDEDGDLD) the composition is skewed to acidic residues. The segment covering 215–238 (SVPESAHSLQSLSGEPYSEDTTSL) has biased composition (polar residues). A coiled-coil region spans residues 339 to 485 (QILELNKRMS…SRIAALRAAG (147 aa)). Residues 391–401 (LTSNISGSSTS) show a composition bias toward low complexity. Residues 424–433 (GHMETQERNP) are compositionally biased toward basic and acidic residues.

As to quaternary structure, binds RAB27A that has been activated by GTP-binding via its N-terminus. Binds MYO5A via its C-terminal coiled coil domain. In terms of tissue distribution, highly expressed in embryos at day 7; not detectable at day 11. Highly expressed in adult stomach; detected at lower levels in kidney, lung, skin and small intestine. Detected in melanocytes.

The protein localises to the melanosome. In terms of biological role, rab effector protein involved in melanosome transport. Serves as link between melanosome-bound RAB27A and the motor protein MYO5A. This is Melanophilin (Mlph) from Mus musculus (Mouse).